A 156-amino-acid polypeptide reads, in one-letter code: Small ribosomal subunit protein uS7c (156 aa).

It belongs to the universal ribosomal protein uS7 family. As to quaternary structure, part of the 30S ribosomal subunit.

The protein resides in the plastid. It localises to the chloroplast. In terms of biological role, one of the primary rRNA binding proteins, it binds directly to 16S rRNA where it nucleates assembly of the head domain of the 30S subunit. The polypeptide is Small ribosomal subunit protein uS7c (rps7) (Chara vulgaris (Common stonewort)).